The primary structure comprises 147 residues: TRAF-interacting protein with FHA domain-containing protein B (147 aa).

Residues 36–108 form the FHA domain; sequence LLVGRGQNTH…LGTINRISFS (73 aa).

In terms of assembly, interacts with TIFA. As to expression, expressed at high levels in spleen and at moderate levels in lung, thymus, and small intestine.

Inhibits TIFA-mediated TRAF6 activation possibly by inducing a conformational change in TIFA. The polypeptide is TRAF-interacting protein with FHA domain-containing protein B (Mus musculus (Mouse)).